Reading from the N-terminus, the 199-residue chain is GTP cyclohydrolase 1 (199 aa).

3 residues coordinate Zn(2+): Cys-89, His-92, and Cys-161.

This sequence belongs to the GTP cyclohydrolase I family. In terms of assembly, homomer.

It catalyses the reaction GTP + H2O = 7,8-dihydroneopterin 3'-triphosphate + formate + H(+). It participates in cofactor biosynthesis; 7,8-dihydroneopterin triphosphate biosynthesis; 7,8-dihydroneopterin triphosphate from GTP: step 1/1. The protein is GTP cyclohydrolase 1 of Bifidobacterium longum (strain DJO10A).